Consider the following 259-residue polypeptide: LKTTPLTLRSPFLHRLPLRALKTHKPTSLHISKSSISASLEAGVGVMATKLGMMSFFEESGTVVPVTVVGFREGNIVTQIKTEATDGYNAVQVGYRRVRDRKLTKPEMGHLEKSGIIPLRHLQEFRLQSIDGFEVTQKLDFGELFKEGDLVDVSGTTIGKGFQGGIKRHNFKRGQMTHGSKSHRQLGSIGAGTTPGRVYKGKKMPGRMGGTKRKIRKLKIVKIDDQLNIIMIKGALPGKPGNLLRIAPAKIVGKNIPKS.

Residues 1-37 (LKTTPLTLRSPFLHRLPLRALKTHKPTSLHISKSSIS) constitute a chloroplast transit peptide. The interval 176-211 (MTHGSKSHRQLGSIGAGTTPGRVYKGKKMPGRMGGT) is disordered. The span at 199–211 (YKGKKMPGRMGGT) shows a compositional bias: basic residues.

Belongs to the universal ribosomal protein uL3 family. As to quaternary structure, part of the 50S ribosomal subunit.

It localises to the plastid. Its subcellular location is the chloroplast. Its function is as follows. One of the primary rRNA binding proteins, it binds directly near the 3'-end of the 23S rRNA, where it nucleates assembly of the 50S subunit. This is Large ribosomal subunit protein uL3c (RPL3) from Nicotiana tabacum (Common tobacco).